A 537-amino-acid chain; its full sequence is Tyrosine-protein kinase Fyn (537 aa).

Glycine 2 carries N-myristoyl glycine lipidation. S-palmitoyl cysteine attachment occurs at residues cysteine 3 and cysteine 6. A disordered region spans residues leucine 14–threonine 35. Phosphoserine occurs at positions 21 and 26. The SH3 domain maps to threonine 82–serine 143. Residues tryptophan 149–cysteine 246 form the SH2 domain. Tyrosine 185 is subject to Phosphotyrosine. The 254-residue stretch at leucine 271–phenylalanine 524 folds into the Protein kinase domain. Residues leucine 277–valine 285 and lysine 299 contribute to the ATP site. Aspartate 390 acts as the Proton acceptor in catalysis. Tyrosine 420 is subject to Phosphotyrosine; by autocatalysis. Tyrosine 531 carries the post-translational modification Phosphotyrosine.

This sequence belongs to the protein kinase superfamily. Tyr protein kinase family. SRC subfamily. Interacts (via its SH3 domain) with PIK3R1 and PRMT8. Interacts with FYB1, PAG1, and SH2D1A. Interacts with CD79A (tyrosine-phosphorylated form); the interaction increases FYN activity. Interacts (via SH2 domain) with CSF1R (tyrosine phosphorylated). Interacts with TOM1L1 (phosphorylated form). Interacts with KDR (tyrosine phosphorylated). Interacts (via SH3 domain) with KLHL2 (via N-terminus). Interacts with SH2D1A and SLAMF1. Interacts with ITCH; the interaction phosphorylates ITCH and negatively regulates its activity. Interacts with FASLG. Interacts with RUNX3. Interacts with KIT. Interacts with EPHA8; possible downstream effector of EPHA8 in regulation of cell adhesion. Interacts with PTK2/FAK1; this interaction leads to PTK2/FAK1 phosphorylation and activation. Interacts with CAV1; this interaction couples integrins to the Ras-ERK pathway. Interacts with UNC119. Interacts (via SH2 domain) with PTPRH (phosphorylated form). Interacts with PTPRO (phosphorylated form). Interacts with PTPRB (phosphorylated form). Interacts with FYB2. Interacts with DSCAM. Interacts with SKAP1 and FYB1; this interaction promotes the phosphorylation of CLNK. Interacts with NEDD9; in the presence of PTK2. The cofactor is Mn(2+). In terms of processing, autophosphorylated at Tyr-420. Phosphorylation on the C-terminal tail at Tyr-531 by CSK maintains the enzyme in an inactive state. PTPRC/CD45 dephosphorylates Tyr-531 leading to activation. Dephosphorylation at Tyr-420 by PTPN2 negatively regulates T-cell receptor signaling. Phosphorylated at tyrosine residues, which can be enhanced by NTN1. Palmitoylated. Palmitoylation at Cys-3 and Cys-6, probably by ZDHHC21, regulates subcellular location. Detected in spinal cord oligodendrocytes (at protein level).

It localises to the cytoplasm. The protein resides in the nucleus. Its subcellular location is the cell membrane. It is found in the perikaryon. It catalyses the reaction L-tyrosyl-[protein] + ATP = O-phospho-L-tyrosyl-[protein] + ADP + H(+). With respect to regulation, inhibited by phosphorylation of Tyr-531 by leukocyte common antigen and activated by dephosphorylation of this site. Its function is as follows. Non-receptor tyrosine-protein kinase that plays a role in many biological processes including regulation of cell growth and survival, cell adhesion, integrin-mediated signaling, cytoskeletal remodeling, cell motility, immune response and axon guidance. Inactive FYN is phosphorylated on its C-terminal tail within the catalytic domain. Following activation by PKA, the protein subsequently associates with PTK2/FAK1, allowing PTK2/FAK1 phosphorylation, activation and targeting to focal adhesions. Involved in the regulation of cell adhesion and motility through phosphorylation of CTNNB1 (beta-catenin) and CTNND1 (delta-catenin). Regulates cytoskeletal remodeling by phosphorylating several proteins including the actin regulator WAS and the microtubule-associated proteins MAP2 and MAPT. Promotes cell survival by phosphorylating AGAP2/PIKE-A and preventing its apoptotic cleavage. Participates in signal transduction pathways that regulate the integrity of the glomerular slit diaphragm (an essential part of the glomerular filter of the kidney) by phosphorylating several slit diaphragm components including NPHS1, KIRREL1 and TRPC6. Plays a role in neural processes by phosphorylating DPYSL2, a multifunctional adapter protein within the central nervous system, ARHGAP32, a regulator for Rho family GTPases implicated in various neural functions, and SNCA, a small pre-synaptic protein. Involved in reelin signaling by mediating phosphorylation of DAB1 following reelin (RELN)-binding to its receptor. Participates in the downstream signaling pathways that lead to T-cell differentiation and proliferation following T-cell receptor (TCR) stimulation. Phosphorylates PTK2B/PYK2 in response to T-cell receptor activation. Also participates in negative feedback regulation of TCR signaling through phosphorylation of PAG1, thereby promoting interaction between PAG1 and CSK and recruitment of CSK to lipid rafts. CSK maintains LCK and FYN in an inactive form. Promotes CD28-induced phosphorylation of VAV1. In mast cells, phosphorylates CLNK after activation of immunoglobulin epsilon receptor signaling. Can also promote CD244-mediated NK cell activation. The polypeptide is Tyrosine-protein kinase Fyn (Rattus norvegicus (Rat)).